A 128-amino-acid polypeptide reads, in one-letter code: Large ribosomal subunit protein bL17 (128 aa).

It belongs to the bacterial ribosomal protein bL17 family. As to quaternary structure, part of the 50S ribosomal subunit. Contacts protein L32.

The sequence is that of Large ribosomal subunit protein bL17 from Klebsiella pneumoniae (strain 342).